We begin with the raw amino-acid sequence, 340 residues long: Conidiation-specific protein 13 (340 aa).

Residues 313-340 (AEAAAGISSGKPAADRKTKGKKGTKFRV) form a disordered region. Over residues 330 to 340 (TKGKKGTKFRV) the composition is skewed to basic residues.

The sequence is that of Conidiation-specific protein 13 (con-13) from Neurospora crassa (strain ATCC 24698 / 74-OR23-1A / CBS 708.71 / DSM 1257 / FGSC 987).